A 377-amino-acid polypeptide reads, in one-letter code: Erythronate-4-phosphate dehydrogenase (377 aa).

Substrate contacts are provided by serine 45 and threonine 67. NAD(+) contacts are provided by residues 127–128 (QV), aspartate 147, and threonine 176. Arginine 209 is an active-site residue. NAD(+) is bound at residue aspartate 233. Glutamate 238 is a catalytic residue. The active-site Proton donor is the histidine 255. Glycine 258 contributes to the NAD(+) binding site. Tyrosine 259 contacts substrate.

This sequence belongs to the D-isomer specific 2-hydroxyacid dehydrogenase family. PdxB subfamily. Homodimer.

It localises to the cytoplasm. The catalysed reaction is 4-phospho-D-erythronate + NAD(+) = (R)-3-hydroxy-2-oxo-4-phosphooxybutanoate + NADH + H(+). The protein operates within cofactor biosynthesis; pyridoxine 5'-phosphate biosynthesis; pyridoxine 5'-phosphate from D-erythrose 4-phosphate: step 2/5. Functionally, catalyzes the oxidation of erythronate-4-phosphate to 3-hydroxy-2-oxo-4-phosphonooxybutanoate. The protein is Erythronate-4-phosphate dehydrogenase of Vibrio vulnificus (strain YJ016).